The chain runs to 297 residues: Cbb3-type cytochrome c oxidase subunit CcoP (297 aa).

Residues 1–35 (MSKKPTTKKEVQTTGHQWDGIEELNTPLPRWWLWT) lie on the Cytoplasmic side of the membrane. Residues 36–56 (FYATIIWGVAYSIAMPAWPIF) form a helical membrane-spanning segment. Over 57–297 (SDKATPGLLG…SYVHSLGGGQ (241 aa)) the chain is Periplasmic. 2 Cytochrome c domains span residues 108 to 199 (YTRN…LQIS) and 206 to 294 (VKAT…HSLG). Positions 121, 124, 125, 174, 219, 222, 223, and 264 each coordinate heme c.

Belongs to the CcoP / FixP family. In terms of assembly, component of the cbb3-type cytochrome c oxidase at least composed of CcoN, CcoO, CcoQ and CcoP. Interacts with CcoQ. The cofactor is heme c.

It localises to the cell inner membrane. The protein operates within energy metabolism; oxidative phosphorylation. C-type cytochrome. Part of the cbb3-type cytochrome c oxidase complex. CcoP subunit is required for transferring electrons from donor cytochrome c via its heme groups to CcoO subunit. From there, electrons are shuttled to the catalytic binuclear center of CcoN subunit where oxygen reduction takes place. The complex also functions as a proton pump. This Rhodobacter capsulatus (Rhodopseudomonas capsulata) protein is Cbb3-type cytochrome c oxidase subunit CcoP.